Reading from the N-terminus, the 729-residue chain is Pentatricopeptide repeat-containing protein At4g04370 (729 aa).

PPR repeat units follow at residues 10–44 (STKY…KLLP), 45–79 (DTFT…GFSS), 80–110 (DFYI…MRER), 111–145 (DVVH…GIKP), 178–208 (DIAV…MEQR), 209–243 (DMVS…GLRP), 244–278 (DQQT…GFDV), 279–309 (DMHL…IPNK), 310–344 (DVVC…GSDL), 345–379 (SSEA…GYTL), 380–414 (DTPA…DLVS), 415–445 (WNAI…TVQQ), 447–481 (DSFT…FIRP), 482–512 (CSLV…ISWK), 513–547 (DVVS…GMEP), 548–583 (NHVI…GVEP), and 584–618 (NHEH…PSID). A type E motif region spans residues 619 to 694 (VLGIILDACR…LPGWSKIEMN (76 aa)). The interval 695–723 (GKTTTFFMNHTSHSDDTVSLLKLLSREMM) is type E(+) motif.

It belongs to the PPR family. PCMP-E subfamily.

The chain is Pentatricopeptide repeat-containing protein At4g04370 (PCMP-E99) from Arabidopsis thaliana (Mouse-ear cress).